The sequence spans 338 residues: 1-aminocyclopropane-1-carboxylate deaminase (338 aa).

Residue K51 is modified to N6-(pyridoxal phosphate)lysine. S78 serves as the catalytic Nucleophile.

It belongs to the ACC deaminase/D-cysteine desulfhydrase family. As to quaternary structure, homotrimer. It depends on pyridoxal 5'-phosphate as a cofactor.

It catalyses the reaction 1-aminocyclopropane-1-carboxylate + H2O = 2-oxobutanoate + NH4(+). Functionally, catalyzes a cyclopropane ring-opening reaction, the irreversible conversion of 1-aminocyclopropane-1-carboxylate (ACC) to ammonia and alpha-ketobutyrate. Allows growth on ACC as a nitrogen source. The chain is 1-aminocyclopropane-1-carboxylate deaminase from Pseudomonas putida (Arthrobacter siderocapsulatus).